Reading from the N-terminus, the 235-residue chain is Lipoprotein-releasing system ATP-binding protein LolD (235 aa).

In terms of domain architecture, ABC transporter spans 7 to 234; that stretch reads LQCTNLSKRY…QQELTLMGAR (228 aa). 43–50 lines the ATP pocket; that stretch reads GSSGSGKS.

This sequence belongs to the ABC transporter superfamily. Lipoprotein translocase (TC 3.A.1.125) family. The complex is composed of two ATP-binding proteins (LolD) and two transmembrane proteins (LolC and LolE).

It is found in the cell inner membrane. Its function is as follows. Part of the ABC transporter complex LolCDE involved in the translocation of mature outer membrane-directed lipoproteins, from the inner membrane to the periplasmic chaperone, LolA. Responsible for the formation of the LolA-lipoprotein complex in an ATP-dependent manner. The polypeptide is Lipoprotein-releasing system ATP-binding protein LolD (Pectobacterium atrosepticum (strain SCRI 1043 / ATCC BAA-672) (Erwinia carotovora subsp. atroseptica)).